We begin with the raw amino-acid sequence, 189 residues long: Large ribosomal subunit protein bL17 (189 aa).

Positions 126–189 (DRARRVKASQ…DADADEAPQN (64 aa)) are disordered. A compositionally biased stretch (low complexity) spans 139-180 (QDAPSEPQAAEEPAAEEAVAATEAVAAPADAEATDAEAGSAD).

Belongs to the bacterial ribosomal protein bL17 family. Part of the 50S ribosomal subunit. Contacts protein L32.

The polypeptide is Large ribosomal subunit protein bL17 (Mycobacterium marinum (strain ATCC BAA-535 / M)).